The primary structure comprises 999 residues: Bifunctional glutamine synthetase adenylyltransferase/adenylyl-removing enzyme (999 aa).

Residues 1 to 493 (MFVRKPATER…LHAKLFYQPL (493 aa)) are adenylyl removase. Residues 498 to 999 (GHTALGIGEG…KAVVRKIFGG (502 aa)) form an adenylyl transferase region.

The protein belongs to the GlnE family. Mg(2+) is required as a cofactor.

It catalyses the reaction [glutamine synthetase]-O(4)-(5'-adenylyl)-L-tyrosine + phosphate = [glutamine synthetase]-L-tyrosine + ADP. It carries out the reaction [glutamine synthetase]-L-tyrosine + ATP = [glutamine synthetase]-O(4)-(5'-adenylyl)-L-tyrosine + diphosphate. Functionally, involved in the regulation of glutamine synthetase GlnA, a key enzyme in the process to assimilate ammonia. When cellular nitrogen levels are high, the C-terminal adenylyl transferase (AT) inactivates GlnA by covalent transfer of an adenylyl group from ATP to specific tyrosine residue of GlnA, thus reducing its activity. Conversely, when nitrogen levels are low, the N-terminal adenylyl removase (AR) activates GlnA by removing the adenylyl group by phosphorolysis, increasing its activity. The regulatory region of GlnE binds the signal transduction protein PII (GlnB) which indicates the nitrogen status of the cell. The sequence is that of Bifunctional glutamine synthetase adenylyltransferase/adenylyl-removing enzyme from Mycolicibacterium smegmatis (strain ATCC 700084 / mc(2)155) (Mycobacterium smegmatis).